Here is a 212-residue protein sequence, read N- to C-terminus: Thymidylate kinase (212 aa).

The residue at position 2 (Ala2) is an N-acetylalanine. ATP-binding positions include 16-21 and Arg97; that span reads RAGKTT. The segment at 133–157 is LID; it reads LQLQLLDAAARGEFGLERYETGTFQ. Positions 182 and 192 each coordinate ATP.

The protein belongs to the thymidylate kinase family. As to quaternary structure, homodimer. Requires Mg(2+) as cofactor.

The catalysed reaction is dTMP + ATP = dTDP + ADP. It participates in pyrimidine metabolism; dTTP biosynthesis. Functionally, catalyzes the phosphorylation of thymidine monophosphate (dTMP) to thymidine diphosphate (dTDP), the immediate precursor for the DNA building block dTTP, with ATP as the preferred phosphoryl donor in the presence of Mg(2+). The sequence is that of Thymidylate kinase (Dtymk) from Mus musculus (Mouse).